The sequence spans 292 residues: Ribonuclease T2-like (292 aa).

Positions 1–23 (MAKTASAMLFLYLLLSRCLLSHA) are cleaved as a signal peptide. 5 disulfides stabilise this stretch: C42–C61, C50–C103, C60–C177, C111–C169, and C246–C280. N52 carries an N-linked (GlcNAc...) asparagine glycan. Residues H96, E162, and H166 contribute to the active site.

Belongs to the RNase T2 family.

It is found in the vacuole lumen. The protein resides in the cytoplasm. It catalyses the reaction a ribonucleotidyl-ribonucleotide-RNA + H2O = a 3'-end 3'-phospho-ribonucleotide-RNA + a 5'-end dephospho-ribonucleoside-RNA + H(+). Functionally, rnase which modulates cell survival under stress conditions. Released from the vacuole to the cytoplasm during stress to promote tRNA and rRNA cleavage and to activate separately a downstream pathway that promotes cell death. Involved in cell size, vacuolar morphology and growth at high temperatures and high salt concentration. The sequence is that of Ribonuclease T2-like (RNY1) from Eremothecium gossypii (strain ATCC 10895 / CBS 109.51 / FGSC 9923 / NRRL Y-1056) (Yeast).